Consider the following 237-residue polypeptide: MLTRKQYELLRFINERLKEAGVPPSFDEMKDALDLRSKSGIHRLITALEERGFIRRLPNRARAIEVIKLPELGVNPGGGNGRRGFTPSVIEGNLGRVRPAASLGGDDDSGRTVAVPVMGRIAAGTPIEALQTRSHTISMPADMLGSGEHYALEVRGDSMVDAGILDGDMALIQKNDSADTGDIVVALIDEEEATLKRFRRRGASIALEPANAAYEVRILPPNRVRIQGKLIGLYRKY.

Positions 26–46 form a DNA-binding region, H-T-H motif; that stretch reads FDEMKDALDLRSKSGIHRLIT. Residues Ser-158 and Lys-196 each act as for autocatalytic cleavage activity in the active site.

Belongs to the peptidase S24 family. Homodimer.

The catalysed reaction is Hydrolysis of Ala-|-Gly bond in repressor LexA.. In terms of biological role, represses a number of genes involved in the response to DNA damage (SOS response), including recA and lexA. In the presence of single-stranded DNA, RecA interacts with LexA causing an autocatalytic cleavage which disrupts the DNA-binding part of LexA, leading to derepression of the SOS regulon and eventually DNA repair. In Rhodopseudomonas palustris (strain BisB18), this protein is LexA repressor.